An 861-amino-acid chain; its full sequence is MAEVTIKQLAEDVGAPVERLLKQMVDAGLEKRGEGDIVTDSEKQKLLAFLKQSHGESFSEPKKITLKRKTTTTLKASGTGANRSINVEVRKKRTYIKRSEAVNDIDAQKQQDIQRAAEEAAAKERETEVEVALQNEPGMEATAEVVESVQQEAANMDTQEAEAAPQASVDESVSATTAGGSQEKAGVAADQEAEDAQKSEARKTSKHRRNKEDSEVRREPADAEDLKRREKHKPKPAPQLKSSKVIAIEEDDSSEEAPRRARQRKKKSKVVQDRSVQPIVREVVISDTITVAELAQKMSVKGVEVIKRLMGMGIMATLNQSIDQDVAQLVAEEMGHKVKLLQEDAVETEVLESISFEGESKSRAPVVSVMGHVDHGKTSLLDYIRRAKVAAQESGGITQHIGAYHVETPRGMISFLDTPGHAAFTAMRARGAQCTDIVILVVAADDGVMPQTQEAVQHAKAAGVPLVVAVNKMDKEQADPDRVKNELSALDVIPEEWGGDVQFVPVSAHTGDGIDDLLEAVLLQSEMLELTAVPDAPGKGVVIESSLDRGRGSVATVLVQNGTLRHGDIVLAGEYYGRVRAMVNENGQNVQEAGPSIPVEILGLNGTPDAGDEFIVVPDEKKAREVAEFRQNKERQTRLQRQQAASLENLFENMGKGGVKELNIVLKTDVRGSLEALIGALAEIGNEEVQVKIIASGVGGITETDANLALSTQAIIVGFNVRADASARKIVEKEGIELRYYSVIYNIIDDVKKALTGMLAPEFREDIVGTAEVRDTFKSPKFGQVAGCMVLEGAVYRNKPIRVLRDNVVIFEGELESLRRFKDDVAEVRAGTECGIGVRNYEVKVGDIIEVFDKIRVERSL.

The tract at residues 107–272 (AQKQQDIQRA…QRKKKSKVVQ (166 aa)) is disordered. A compositionally biased stretch (basic and acidic residues) spans 115–128 (RAAEEAAAKERETE). Polar residues-rich tracts occupy residues 148–158 (SVQQEAANMDT) and 169–180 (VDESVSATTAGG). Basic and acidic residues predominate over residues 210 to 228 (NKEDSEVRREPADAEDLKR). Over residues 260–269 (RARQRKKKSK) the composition is skewed to basic residues. Residues 362-531 (SRAPVVSVMG…LLQSEMLELT (170 aa)) enclose the tr-type G domain. Residues 371 to 378 (GHVDHGKT) form a G1 region. Residue 371–378 (GHVDHGKT) coordinates GTP. The segment at 396–400 (GITQH) is G2. The segment at 417-420 (DTPG) is G3. Residues 417–421 (DTPGH) and 471–474 (NKMD) each bind GTP. The interval 471-474 (NKMD) is G4. Residues 507–509 (SAH) form a G5 region.

The protein belongs to the TRAFAC class translation factor GTPase superfamily. Classic translation factor GTPase family. IF-2 subfamily.

The protein resides in the cytoplasm. In terms of biological role, one of the essential components for the initiation of protein synthesis. Protects formylmethionyl-tRNA from spontaneous hydrolysis and promotes its binding to the 30S ribosomal subunits. Also involved in the hydrolysis of GTP during the formation of the 70S ribosomal complex. The polypeptide is Translation initiation factor IF-2 (Hahella chejuensis (strain KCTC 2396)).